We begin with the raw amino-acid sequence, 230 residues long: Sugar fermentation stimulation protein homolog (230 aa).

Belongs to the SfsA family.

The sequence is that of Sugar fermentation stimulation protein homolog from Clostridium botulinum (strain Alaska E43 / Type E3).